A 549-amino-acid polypeptide reads, in one-letter code: Glucose-6-phosphate isomerase (549 aa).

E355 functions as the Proton donor in the catalytic mechanism. Catalysis depends on residues H386 and K514.

The protein belongs to the GPI family.

Its subcellular location is the cytoplasm. The catalysed reaction is alpha-D-glucose 6-phosphate = beta-D-fructose 6-phosphate. It participates in carbohydrate biosynthesis; gluconeogenesis. It functions in the pathway carbohydrate degradation; glycolysis; D-glyceraldehyde 3-phosphate and glycerone phosphate from D-glucose: step 2/4. Catalyzes the reversible isomerization of glucose-6-phosphate to fructose-6-phosphate. The sequence is that of Glucose-6-phosphate isomerase from Salmonella typhi.